A 322-amino-acid chain; its full sequence is MKTSLPIVVLLTAVISGVHPNPTPKSCTVSEEDLTTIRNAIQKASRASLDDVNLDEDLIAKCPLLKTITASLKSVASEIATLKDTGISEEQVDELKQSYEQQVNEIVKSRDIFEKQSGGDVMKEQGAMINRMTELQVQVAQLQQQIGEQTSRMYDDMAELIFQRLAMNSTDSIRNYTAHMMEQKLHTLMTKLETNYRIFLGALRYLDHLGDQPLIDKVFDGILKRLDEMSLETNKERENGKYVLVNLLCWTVNNRFLTEKYRKKQLELFRIALKFYPKTGNKEANEADIRGRQFCDANFPVNVITWFAVSRAAEGWGLRGTL.

The signal sequence occupies residues 1-20; the sequence is MKTSLPIVVLLTAVISGVHP. Cysteine 27 and cysteine 62 are joined by a disulfide. N-linked (GlcNAc...) asparagine glycans are attached at residues asparagine 168 and asparagine 175. A disulfide bond links cysteine 249 and cysteine 295.

In terms of assembly, monomer in solution. Interacts (via the N-terminal domain) with cuticular protein Cp19 (via the C-terminus). Post-translationally, proteolytically cleaved by human mast cell tryptase and chymase. In terms of processing, glycosylated. As to expression, female salivary gland (at protein level). Female saliva (at protein level).

It localises to the secreted. Salivary protein that promotes mosquito blood feeding on the vertebrate host by inducing morphological changes in the mosquito labrum. Interacts with the mosquito labrum end tip and triggers salivation and probing. Modulates enzymatic activities of human tryptase and chymase. The sequence is that of Labrum-interacting protein from saliva LIPS-2 from Aedes albopictus (Asian tiger mosquito).